A 396-amino-acid polypeptide reads, in one-letter code: Elongation factor Tu 2 (396 aa).

The tr-type G domain maps to 10-206; that stretch reads KPHCNIGTIG…AVDAYIPQPE (197 aa). Positions 19-26 are G1; it reads GHVDHGKT. 19-26 is a binding site for GTP; the sequence is GHVDHGKT. A Mg(2+)-binding site is contributed by threonine 26. Residues 60-64 form a G2 region; the sequence is GITIS. A G3 region spans residues 81–84; the sequence is DCPG. GTP is bound by residues 81–85 and 136–139; these read DCPGH and NKCD. Positions 136–139 are G4; it reads NKCD. The segment at 174–176 is G5; it reads SAL.

Belongs to the TRAFAC class translation factor GTPase superfamily. Classic translation factor GTPase family. EF-Tu/EF-1A subfamily. As to quaternary structure, monomer.

Its subcellular location is the cytoplasm. It catalyses the reaction GTP + H2O = GDP + phosphate + H(+). GTP hydrolase that promotes the GTP-dependent binding of aminoacyl-tRNA to the A-site of ribosomes during protein biosynthesis. In Rhodopseudomonas palustris (strain BisB5), this protein is Elongation factor Tu 2.